Consider the following 144-residue polypeptide: Austinoid biosynthesis clusters protein S (144 aa).

The protein belongs to the trt14 isomerase family. As to quaternary structure, homodimer.

It functions in the pathway secondary metabolite biosynthesis; terpenoid biosynthesis. In terms of biological role, part of the gene cluster B that mediates the biosynthesis of the fungal meroterpenoid acetoxydehydroaustin. The first step of the pathway is the synthesis of 3,5-dimethylorsellinic acid by the polyketide synthase ausA. 3,5-dimethylorsellinic acid is then prenylated by the polyprenyl transferase ausN. Further epoxidation by the FAD-dependent monooxygenase ausM and cyclization by the probable terpene cyclase ausL lead to the formation of protoaustinoid A. Protoaustinoid A is then oxidized to spiro-lactone preaustinoid A3 by the combined action of the FAD-binding monooxygenases ausB and ausC, and the dioxygenase ausE. Acid-catalyzed keto-rearrangement and ring contraction of the tetraketide portion of preaustinoid A3 by ausJ lead to the formation of preaustinoid A4. The aldo-keto reductase ausK, with the help of ausH, is involved in the next step by transforming preaustinoid A4 into isoaustinone which is in turn hydroxylated by the P450 monooxygenase ausI to form austinolide. The cytochrome P450 monooxygenase ausG then modifies austinolide to austinol. Austinol is further acetylated to austin by the O-acetyltransferase ausP, which spontaneously changes to dehydroaustin. The cytochrome P450 monooxygenase then converts dehydroaustin is into 7-dehydrodehydroaustin. The hydroxylation catalyzed by ausR permits the second O-acetyltransferase ausQ to add an additional acetyl group to the molecule, leading to the formation of acetoxydehydroaustin. Due to genetic rearrangements of the clusters and the subsequent loss of some enzymes, the end product of the Penicillium brasilianum austinoid biosynthesis clusters is acetoxydehydroaustin. AusS is necessary for austinoids production and may play a possible function as a regulator. This chain is Austinoid biosynthesis clusters protein S, found in Penicillium brasilianum.